A 163-amino-acid chain; its full sequence is Iron-sulfur cluster assembly protein 2 (163 aa).

The N-terminal 48 residues, 1-48 (MMMLRQTSRKAYLGLQASPLGLGRRLYHENVIDHFENPRNVGSFNRND), are a transit peptide targeting the mitochondrion.

It belongs to the NifU family. In terms of assembly, component of the core Fe-S cluster (ISC) assembly machinery. Requires [2Fe-2S] cluster as cofactor. Mostly expressed in leaves, pollen and flowers.

It is found in the mitochondrion matrix. The protein operates within cofactor biosynthesis; iron-sulfur cluster biosynthesis. In terms of biological role, scaffold protein for the de novo synthesis of iron-sulfur (Fe-S) clusters within mitochondria, which is required for maturation of both mitochondrial and cytoplasmic [2Fe-2S] and [4Fe-4S] proteins. First, a [2Fe-2S] cluster is transiently assembled on the scaffold protein ISCU (ISU1, ISU2 or ISU3). In a second step, the cluster is released from ISCU, transferred to a glutaredoxin, followed by the formation of mitochondrial [2Fe-2S] proteins, the synthesis of [4Fe-4S] clusters and their target-specific insertion into the recipient apoproteins. Cluster assembly on ISCU depends on the function of the cysteine desulfurase complex NFS1-ISD11, which serves as the sulfur donor for cluster synthesis, the iron-binding protein frataxin as the putative iron donor, and the electron transfer chain comprised of ferredoxin reductase and ferredoxin, which receive their electrons from NADH. This Arabidopsis thaliana (Mouse-ear cress) protein is Iron-sulfur cluster assembly protein 2 (ISU2).